We begin with the raw amino-acid sequence, 156 residues long: MAKKSGEGQKIISDNRQARFNYHIIETYEAGVALQGTEVKSIREGKVNLRDGYALIRNNEAWLLNVHISPYQKAGDFFNHEPRRSRRLLLHKQEIRKLIGKVEQQGLTLVPLRMYFKRGWVKVDIALAQGKKLYDKRETIKRRDDKRAMQRAIKQY.

It belongs to the SmpB family.

It localises to the cytoplasm. Its function is as follows. Required for rescue of stalled ribosomes mediated by trans-translation. Binds to transfer-messenger RNA (tmRNA), required for stable association of tmRNA with ribosomes. tmRNA and SmpB together mimic tRNA shape, replacing the anticodon stem-loop with SmpB. tmRNA is encoded by the ssrA gene; the 2 termini fold to resemble tRNA(Ala) and it encodes a 'tag peptide', a short internal open reading frame. During trans-translation Ala-aminoacylated tmRNA acts like a tRNA, entering the A-site of stalled ribosomes, displacing the stalled mRNA. The ribosome then switches to translate the ORF on the tmRNA; the nascent peptide is terminated with the 'tag peptide' encoded by the tmRNA and targeted for degradation. The ribosome is freed to recommence translation, which seems to be the essential function of trans-translation. This is SsrA-binding protein from Trichodesmium erythraeum (strain IMS101).